We begin with the raw amino-acid sequence, 221 residues long: Probable serine protease inhibitor 6 (221 aa).

The signal sequence occupies residues 1–22 (MKCLFLLCLCLFPIVVFSSTFT). The propeptide occupies 23–28 (SQNPIN). A Vacuolar targeting signal motif is present at residues 25–30 (NPINLP). 2 disulfide bridges follow: Cys-76–Cys-125 and Cys-174–Cys-191.

Belongs to the protease inhibitor I3 (leguminous Kunitz-type inhibitor) family.

Its subcellular location is the vacuole. In terms of biological role, inhibitor of trypsin (serine protease). May protect the plant by inhibiting proteases of invading organisms. The sequence is that of Probable serine protease inhibitor 6 from Solanum tuberosum (Potato).